We begin with the raw amino-acid sequence, 565 residues long: Periplasmic trehalase (565 aa).

The first 30 residues, 1 to 30 (MKSPAPSRPQKMALIPACIFLCFAALSVQA), serve as a signal peptide directing secretion. Substrate is bound by residues arginine 152, 159–160 (WD), asparagine 196, 205–207 (RSQ), 277–279 (RPE), and glycine 310. Catalysis depends on proton donor/acceptor residues aspartate 312 and glutamate 496. Glutamate 511 is a binding site for substrate. Positions 539–565 (CDNVPATRPLSESTTQPVKQKEAEPTP) are disordered.

Belongs to the glycosyl hydrolase 37 family. Monomer.

The protein resides in the periplasm. It catalyses the reaction alpha,alpha-trehalose + H2O = alpha-D-glucose + beta-D-glucose. Its function is as follows. Provides the cells with the ability to utilize trehalose at high osmolarity by splitting it into glucose molecules that can subsequently be taken up by the phosphotransferase-mediated uptake system. This is Periplasmic trehalase from Escherichia coli O17:K52:H18 (strain UMN026 / ExPEC).